Here is a 337-residue protein sequence, read N- to C-terminus: Bifunctional methylenetetrahydrofolate dehydrogenase/cyclohydrolase, mitochondrial (337 aa).

The N-terminal 30 residues, 1-30, are a transit peptide targeting the mitochondrion; the sequence is MATALCPLRALGQTAFRPRTRRLHLSAPRA. Substrate contacts are provided by residues 79–83 and 126–128; these read YVLNK and VQL. Residues 195–197 and R228 contribute to the NAD(+) site; that span reads GRS. 304-308 contacts substrate; that stretch reads PGGVG.

Belongs to the tetrahydrofolate dehydrogenase/cyclohydrolase family. Requires Mg(2+) as cofactor.

Its subcellular location is the mitochondrion. It carries out the reaction (6R)-5,10-methylene-5,6,7,8-tetrahydrofolate + NAD(+) = (6R)-5,10-methenyltetrahydrofolate + NADH. It catalyses the reaction (6R)-5,10-methenyltetrahydrofolate + H2O = (6R)-10-formyltetrahydrofolate + H(+). Its function is as follows. Although its dehydrogenase activity is NAD-specific, it can also utilize NADP at a reduced efficiency. The chain is Bifunctional methylenetetrahydrofolate dehydrogenase/cyclohydrolase, mitochondrial (MTHFD2) from Gallus gallus (Chicken).